Reading from the N-terminus, the 117-residue chain is Ig heavy chain V region 102 (117 aa).

A signal peptide spans 1–19 (MGWSCIILFLVATATGVHS). Residues 20-49 (HVQLQQPGAELVKPGASVKVSCKASGYTFT) form a framework-1 region. Cys-41 and Cys-115 are joined by a disulfide. The interval 50–54 (SYWMH) is complementarity-determining-1. The tract at residues 55 to 68 (WVKQRPGQGLEWIG) is framework-2. A complementarity-determining-2 region spans residues 69 to 85 (RIHPSDSDTNYNQKFKG). The tract at residues 86–117 (KATLTVDKSSSTAYMQLSSLTSEDSAVYYCAI) is framework-3.

The chain is Ig heavy chain V region 102 from Mus musculus (Mouse).